A 477-amino-acid chain; its full sequence is Aspartyl/glutamyl-tRNA(Asn/Gln) amidotransferase subunit B (477 aa).

Belongs to the GatB/GatE family. GatB subfamily. Heterotrimer of A, B and C subunits.

It catalyses the reaction L-glutamyl-tRNA(Gln) + L-glutamine + ATP + H2O = L-glutaminyl-tRNA(Gln) + L-glutamate + ADP + phosphate + H(+). The enzyme catalyses L-aspartyl-tRNA(Asn) + L-glutamine + ATP + H2O = L-asparaginyl-tRNA(Asn) + L-glutamate + ADP + phosphate + 2 H(+). Its function is as follows. Allows the formation of correctly charged Asn-tRNA(Asn) or Gln-tRNA(Gln) through the transamidation of misacylated Asp-tRNA(Asn) or Glu-tRNA(Gln) in organisms which lack either or both of asparaginyl-tRNA or glutaminyl-tRNA synthetases. The reaction takes place in the presence of glutamine and ATP through an activated phospho-Asp-tRNA(Asn) or phospho-Glu-tRNA(Gln). The polypeptide is Aspartyl/glutamyl-tRNA(Asn/Gln) amidotransferase subunit B (Coxiella burnetii (strain CbuG_Q212) (Coxiella burnetii (strain Q212))).